Reading from the N-terminus, the 130-residue chain is Small ribosomal subunit protein uS9 (130 aa).

Belongs to the universal ribosomal protein uS9 family.

The polypeptide is Small ribosomal subunit protein uS9 (Methylococcus capsulatus (strain ATCC 33009 / NCIMB 11132 / Bath)).